A 199-amino-acid polypeptide reads, in one-letter code: Recombination protein RecR (199 aa).

The segment at 57 to 72 adopts a C4-type zinc-finger fold; that stretch reads CQSCRTYTEESLCPIC. The Toprim domain maps to 81–176; that stretch reads STICVVETPA…VISRIAHGVP (96 aa).

Belongs to the RecR family.

May play a role in DNA repair. It seems to be involved in an RecBC-independent recombinational process of DNA repair. It may act with RecF and RecO. The sequence is that of Recombination protein RecR from Shewanella sp. (strain MR-4).